Consider the following 925-residue polypeptide: Leucine--tRNA ligase (925 aa).

A 'HIGH' region motif is present at residues 40–51 (PYPSGAGLHVGH). The 'KMSKS' region motif lies at 700-704 (KMSKS). Lysine 703 provides a ligand contact to ATP.

This sequence belongs to the class-I aminoacyl-tRNA synthetase family.

Its subcellular location is the cytoplasm. The catalysed reaction is tRNA(Leu) + L-leucine + ATP = L-leucyl-tRNA(Leu) + AMP + diphosphate. In Porphyromonas gingivalis (strain ATCC 33277 / DSM 20709 / CIP 103683 / JCM 12257 / NCTC 11834 / 2561), this protein is Leucine--tRNA ligase.